Here is a 425-residue protein sequence, read N- to C-terminus: Serine--tRNA ligase (425 aa).

Position 233–235 (233–235 (TAE)) interacts with L-serine. 264–266 (RAE) is an ATP binding site. Residue glutamate 287 participates in L-serine binding. Residue 351-354 (EISS) participates in ATP binding. Serine 387 lines the L-serine pocket.

This sequence belongs to the class-II aminoacyl-tRNA synthetase family. Type-1 seryl-tRNA synthetase subfamily. Homodimer. The tRNA molecule binds across the dimer.

It localises to the cytoplasm. The catalysed reaction is tRNA(Ser) + L-serine + ATP = L-seryl-tRNA(Ser) + AMP + diphosphate + H(+). It catalyses the reaction tRNA(Sec) + L-serine + ATP = L-seryl-tRNA(Sec) + AMP + diphosphate + H(+). Its pathway is aminoacyl-tRNA biosynthesis; selenocysteinyl-tRNA(Sec) biosynthesis; L-seryl-tRNA(Sec) from L-serine and tRNA(Sec): step 1/1. Catalyzes the attachment of serine to tRNA(Ser). Is also able to aminoacylate tRNA(Sec) with serine, to form the misacylated tRNA L-seryl-tRNA(Sec), which will be further converted into selenocysteinyl-tRNA(Sec). This Clostridium botulinum (strain Alaska E43 / Type E3) protein is Serine--tRNA ligase.